The following is a 702-amino-acid chain: Ribosomal RNA large subunit methyltransferase K/L (702 aa).

In terms of domain architecture, THUMP spans L43–L154.

It belongs to the methyltransferase superfamily. RlmKL family.

It is found in the cytoplasm. It catalyses the reaction guanosine(2445) in 23S rRNA + S-adenosyl-L-methionine = N(2)-methylguanosine(2445) in 23S rRNA + S-adenosyl-L-homocysteine + H(+). The enzyme catalyses guanosine(2069) in 23S rRNA + S-adenosyl-L-methionine = N(2)-methylguanosine(2069) in 23S rRNA + S-adenosyl-L-homocysteine + H(+). In terms of biological role, specifically methylates the guanine in position 2445 (m2G2445) and the guanine in position 2069 (m7G2069) of 23S rRNA. The sequence is that of Ribosomal RNA large subunit methyltransferase K/L from Escherichia coli O6:K15:H31 (strain 536 / UPEC).